Here is a 176-residue protein sequence, read N- to C-terminus: NAD(P)H-quinone oxidoreductase subunit 6, chloroplastic (176 aa).

5 helical membrane passes run 10-30 (FLLV…ILFT), 33-53 (IFSA…YIIA), 61-81 (AQLL…VMFI), 92-112 (LFTL…FLLI), and 152-172 (FFPP…GAIA).

Belongs to the complex I subunit 6 family. In terms of assembly, NDH is composed of at least 16 different subunits, 5 of which are encoded in the nucleus.

It localises to the plastid. The protein localises to the chloroplast thylakoid membrane. It carries out the reaction a plastoquinone + NADH + (n+1) H(+)(in) = a plastoquinol + NAD(+) + n H(+)(out). The catalysed reaction is a plastoquinone + NADPH + (n+1) H(+)(in) = a plastoquinol + NADP(+) + n H(+)(out). Functionally, NDH shuttles electrons from NAD(P)H:plastoquinone, via FMN and iron-sulfur (Fe-S) centers, to quinones in the photosynthetic chain and possibly in a chloroplast respiratory chain. The immediate electron acceptor for the enzyme in this species is believed to be plastoquinone. Couples the redox reaction to proton translocation, and thus conserves the redox energy in a proton gradient. The sequence is that of NAD(P)H-quinone oxidoreductase subunit 6, chloroplastic (ndhG) from Fagopyrum esculentum subsp. ancestrale (Wild buckwheat).